Consider the following 124-residue polypeptide: UPF0102 protein BL0935 (124 aa).

It belongs to the UPF0102 family.

The sequence is that of UPF0102 protein BL0935 from Bifidobacterium longum (strain NCC 2705).